The sequence spans 255 residues: Indole-3-glycerol phosphate synthase (255 aa).

The protein belongs to the TrpC family.

It carries out the reaction 1-(2-carboxyphenylamino)-1-deoxy-D-ribulose 5-phosphate + H(+) = (1S,2R)-1-C-(indol-3-yl)glycerol 3-phosphate + CO2 + H2O. It functions in the pathway amino-acid biosynthesis; L-tryptophan biosynthesis; L-tryptophan from chorismate: step 4/5. In Streptococcus thermophilus (strain CNRZ 1066), this protein is Indole-3-glycerol phosphate synthase.